Here is a 205-residue protein sequence, read N- to C-terminus: dTTP/UTP pyrophosphatase (205 aa).

D81 (proton acceptor) is an active-site residue.

It belongs to the Maf family. YhdE subfamily. The cofactor is a divalent metal cation.

The protein localises to the cytoplasm. The catalysed reaction is dTTP + H2O = dTMP + diphosphate + H(+). It catalyses the reaction UTP + H2O = UMP + diphosphate + H(+). In terms of biological role, nucleoside triphosphate pyrophosphatase that hydrolyzes dTTP and UTP. May have a dual role in cell division arrest and in preventing the incorporation of modified nucleotides into cellular nucleic acids. The chain is dTTP/UTP pyrophosphatase from Agathobacter rectalis (strain ATCC 33656 / DSM 3377 / JCM 17463 / KCTC 5835 / VPI 0990) (Eubacterium rectale).